The following is a 2517-amino-acid chain: Cullin-9 (2517 aa).

K87 participates in a covalent cross-link: Glycyl lysine isopeptide (Lys-Gly) (interchain with G-Cter in ubiquitin). Positions 276–288 (SPELGAGDQSSPC) are enriched in polar residues. The tract at residues 276 to 296 (SPELGAGDQSSPCATREKSRG) is disordered. The CPH domain occupies 366–439 (RSEFSSRSGY…HWHMLEILGP (74 aa)). Positions 576–589 (SNEPSSSSTSRNHS) are enriched in low complexity. Residues 576–639 (SNEPSSSSTS…TETPMAQSDS (64 aa)) form a disordered region. The segment covering 593–609 (DPEEESKSEASFSEEET) has biased composition (acidic residues). The span at 610–630 (ESLKAKAEAPKTEAEPTKTRT) shows a compositional bias: basic and acidic residues. S976 bears the Phosphoserine mark. The region spanning 1143-1322 (PINIPFFDVF…RTCLFYTIRA (180 aa)) is the DOC domain. 1363–1370 (AAQALGKT) contacts ATP. Disordered regions lie at residues 1432 to 1466 (VEPP…VLPS) and 1664 to 1685 (DEEE…AEKE). Over residues 1433 to 1443 (EPPPGPSPEPS) the composition is skewed to pro residues. At S1457 the chain carries Phosphoserine. Residues 1649 to 1691 (LFQLQRLDKLFLEQEDEEEKRLEEEEEEEEEEEAEKELFIEDP) adopt a coiled-coil conformation. Over residues 1664–1683 (DEEEKRLEEEEEEEEEEEAE) the composition is skewed to acidic residues. K1881 is covalently cross-linked (Glycyl lysine isopeptide (Lys-Gly) (interchain with G-Cter in NEDD8)). The interval 2066-2283 (RPDHCPVCVS…KDYYNCSAMV (218 aa)) is TRIAD supradomain. Zn(2+) is bound by residues C2070, C2073, C2088, H2090, C2093, C2096, C2115, C2120, C2160, C2166, C2181, C2184, C2189, C2192, H2198, C2203, C2236, and C2239. Residues 2070–2120 (CPVCVSPLGCDDDLPSLCCMHYCCKSCWNEYLTTRIEQNLVLNCTCPIADC) form an RING-type 1 zinc finger. The IBR-type zinc-finger motif lies at 2140–2203 (SKYEKALLRG…FPEAHYPASC (64 aa)). The RING-type 2; atypical zinc-finger motif lies at 2236–2265 (CPSCQAPIEKNEGCLHMTCAKCNHGFCWRC). Residue C2249 is part of the active site. Zn(2+)-binding residues include C2254, C2257, C2262, C2265, H2273, and C2279. Residues 2365–2385 (VEQQTENLELHTNALQILLEE) are a coiled coil. S2436 is modified (phosphoserine). The tract at residues 2442–2517 (WEAKGPNMPG…EEEDEDEAYD (76 aa)) is disordered. 2 stretches are compositionally biased toward acidic residues: residues 2461–2499 (EAEE…ENLD) and 2506–2517 (GDEEEDEDEAYD).

The protein belongs to the cullin family. As to quaternary structure, component of the Cul9-RING complex consisting of CUL9 and RBX1; the CUL9-RBX1 complex is a heterododecamer composed of six CUL9 and six RBX1 protomers. Interacts (via C-terminal TRIAD/RBR supradomain) with E2 ubiquitin-conjugating enzyme UBE2L3. Interacts with CUL7; the interaction with the CUL7 component of the 3M complex leads to inhibition of CUL9 activity. The CUL7-CUL9 heterodimer seems to interact specifically with TP53, likely via the CPH domain. Forms a complex with p53/TP53 in the cytoplasm of unstressed cells. Interacts with UBCH7 and UBCH8. Autoubiquitinated by the CUL9-RBX1 complex at Lys-87. In terms of processing, neddylated. Neddylation is mediated by E1 enzyme UBA3-NAE1 complex and E2 enzyme UBE2F. Structural rearrangment of the C-terminal TRIAD/RBR supradomain may play a role in neddylation and deneddylation. Ubiquitously expressed in all tissues with highest expression in testis brain and kidney.

It is found in the cytoplasm. Functionally, core component of a Cul9-RING ubiquitin-protein ligase complex composed of CUL9 and RBX1. The CUL9-RBX1 complex mediates ubiquitination and subsequent degradation of BIRC5 and is required to maintain microtubule dynamics and genome integrity. Acts downstream of the 3M complex, which inhibits the ubiquitination of BIRC5. The CUL9-RBX1 complex also mediates mono-ubiquitination of p53/TP53. Acts as a cytoplasmic anchor protein in p53/TP53-associated protein complex. Regulates the subcellular localization of p53/TP53 and its subsequent function. Ubiquitinates apurinic/apyrimidinic endodeoxyribonuclease APEX2. Ubiquitination by the CUL9-RBX1 complex is predominantly mediated by E2 ubiquitin-conjugating enzymes UBE2L3 and UBE2D2. This Homo sapiens (Human) protein is Cullin-9 (CUL9).